The sequence spans 246 residues: 5'-nucleotidase SurE (246 aa).

A divalent metal cation-binding residues include aspartate 8, aspartate 9, serine 39, and asparagine 91.

The protein belongs to the SurE nucleotidase family. The cofactor is a divalent metal cation.

Its subcellular location is the cytoplasm. The enzyme catalyses a ribonucleoside 5'-phosphate + H2O = a ribonucleoside + phosphate. In terms of biological role, nucleotidase that shows phosphatase activity on nucleoside 5'-monophosphates. This is 5'-nucleotidase SurE from Mannheimia succiniciproducens (strain KCTC 0769BP / MBEL55E).